The following is a 399-amino-acid chain: Peroxisome assembly protein 12 (399 aa).

The segment at 1–24 is disordered; sequence MSFYSNLPSAGQSSRGSSTSGRNG. The Peroxisomal matrix portion of the chain corresponds to 1 to 33; sequence MSFYSNLPSAGQSSRGSSTSGRNGVGLEPLYPT. Residues 9 to 24 are compositionally biased toward low complexity; it reads SAGQSSRGSSTSGRNG. Residues 34–62 form a helical membrane-spanning segment; sequence IFEIMSSQEIDSLLPASIRYLLANHLVAN. Over 63–67 the chain is Cytoplasmic; the sequence is FPNRY. A helical transmembrane segment spans residues 68 to 92; it reads TLRLNKYFFEWFQAIKGFVEWYHLK. The Peroxisomal matrix segment spans residues 93–136; that stretch reads TYNSTFIDRFYGLQLFSSRDRNLALTQCLNPKGQSEWPQGLQLN. The helical transmembrane segment at 137-168 threads the bilayer; the sequence is QQQKSVIFLEKIILPYITAKLDEILEKISMNN. Topologically, residues 169–171 are cytoplasmic; sequence IFS. The helical transmembrane segment at 172 to 208 threads the bilayer; sequence SDETENKWPKRAFLRIYPFIKKLLALSNLLVKLLFLT. The Peroxisomal matrix portion of the chain corresponds to 209-277; that stretch reads KRTGSVSLLQ…PRFLTFMGSQ (69 aa). A helical transmembrane segment spans residues 278-305; sequence FFPTFIFVLRVYQWWTTQDMTTKLQKRV. Over 306-399 the chain is Cytoplasmic; that stretch reads NDLDEDIPRP…VVTGIRKLLI (94 aa). Positions 334, 337, 354, and 357 each coordinate Zn(2+). The RING-type; degenerate zinc finger occupies 334 to 373; it reads CPVCEKTVQNPCVLETGYVACYPCAISYLVNNEGHCPVTN.

It belongs to the pex2/pex10/pex12 family. In terms of assembly, component of the PEX2-PEX10-PEX12 retrotranslocation channel, composed of PEX2, PEX10 and PEX12.

It localises to the peroxisome membrane. It functions in the pathway protein modification; protein ubiquitination. Functionally, component of a retrotranslocation channel required for peroxisome organization by mediating export of the PEX5 receptor from peroxisomes to the cytosol, thereby promoting PEX5 recycling. The retrotranslocation channel is composed of PEX2, PEX10 and PEX12; each subunit contributing transmembrane segments that coassemble into an open channel that specifically allows the passage of PEX5 through the peroxisomal membrane. PEX12 also regulates PEX5 recycling by activating the E3 ubiquitin-protein ligase activity of PEX10. When PEX5 recycling is compromised, PEX12 stimulates PEX10-mediated polyubiquitination of PEX5, leading to its subsequent degradation. This chain is Peroxisome assembly protein 12, found in Saccharomyces cerevisiae (strain ATCC 204508 / S288c) (Baker's yeast).